The sequence spans 66 residues: MNNLEKIYRLCDKIEKEKKYLFCLWPIVDGRVGLDVLDYETEDRVDGSTFDNALDVIDWLEENYVR.

This is an uncharacterized protein from Enterobacteria phage T4 (Bacteriophage T4).